Reading from the N-terminus, the 778-residue chain is E3 UFM1-protein ligase 1 homolog (778 aa).

The tract at residues Asn-404–Arg-477 is disordered. Residues Lys-445–Ala-457 show a composition bias toward basic residues.

This sequence belongs to the UFL1 family.

Its function is as follows. E3 UFM1-protein ligase that mediates ufmylation of target proteins. The sequence is that of E3 UFM1-protein ligase 1 homolog from Drosophila virilis (Fruit fly).